A 280-amino-acid polypeptide reads, in one-letter code: Protein FLOURY 1-like (280 aa).

Residues 22–42 traverse the membrane as a helical segment; that stretch reads GFGFGIFVIGCSSQFFNLVFL. The tract at residues 153-187 is disordered; that stretch reads VALSETELDEKNHHGEEEESEDEEESQSQNDEDQL. The span at 169 to 187 shows a compositional bias: acidic residues; it reads EEESEDEEESQSQNDEDQL. Positions 188 to 280 constitute a GTD-binding domain; it reads LDVITLRTMV…LDDDEDKIQM (93 aa).

Its subcellular location is the membrane. This chain is Protein FLOURY 1-like, found in Arabidopsis thaliana (Mouse-ear cress).